A 679-amino-acid chain; its full sequence is Cysteine-rich receptor-like protein kinase 29 (679 aa).

The signal sequence occupies residues 1-23 (MEHVRVIFFFACFLTLAPFHAFA). Over 24–286 (QVDSYEFDPD…RTGKGKGGSK (263 aa)) the chain is Extracellular. Gnk2-homologous domains lie at 30-134 (FDPD…NRTI) and 140-249 (TNPT…TWRF). 6 N-linked (GlcNAc...) asparagine glycosylation sites follow: Asn-41, Asn-45, Asn-71, Asn-107, Asn-131, and Asn-187. The disordered stretch occupies residues 260 to 281 (PPAIQPADSPQSAARTERTGKG). The chain crosses the membrane as a helical span at residues 287–307 (VIIAIVIPILLVALLAICLCL). Residues 308-679 (VLKWRKNKSG…DVTVSEFSPR (372 aa)) are Cytoplasmic-facing. One can recognise a Protein kinase domain in the interval 357 to 637 (FSSENELGRG…SLMLNSYSFT (281 aa)). ATP contacts are provided by residues 363-371 (LGRGGFGSV) and Lys-385. Phosphotyrosine is present on Tyr-430. The active-site Proton acceptor is Asp-482. The residue at position 486 (Ser-486) is a Phosphoserine. Thr-524 carries the post-translational modification Phosphothreonine. Position 532 is a phosphotyrosine (Tyr-532). The tract at residues 659–679 (SSTEGLQMSSNDVTVSEFSPR) is disordered.

This sequence belongs to the protein kinase superfamily. Ser/Thr protein kinase family. CRK subfamily.

The protein resides in the membrane. It catalyses the reaction L-seryl-[protein] + ATP = O-phospho-L-seryl-[protein] + ADP + H(+). It carries out the reaction L-threonyl-[protein] + ATP = O-phospho-L-threonyl-[protein] + ADP + H(+). The protein is Cysteine-rich receptor-like protein kinase 29 (CRK29) of Arabidopsis thaliana (Mouse-ear cress).